Here is a 203-residue protein sequence, read N- to C-terminus: Small ribosomal subunit protein uS4 (203 aa).

One can recognise an S4 RNA-binding domain in the interval 93-173; the sequence is RRFDNVVFRA…IPSWIQVDKA (81 aa).

This sequence belongs to the universal ribosomal protein uS4 family. As to quaternary structure, part of the 30S ribosomal subunit. Contacts protein S5. The interaction surface between S4 and S5 is involved in control of translational fidelity.

One of the primary rRNA binding proteins, it binds directly to 16S rRNA where it nucleates assembly of the body of the 30S subunit. Its function is as follows. With S5 and S12 plays an important role in translational accuracy. The chain is Small ribosomal subunit protein uS4 from Pelodictyon phaeoclathratiforme (strain DSM 5477 / BU-1).